We begin with the raw amino-acid sequence, 353 residues long: Phosphate acyltransferase (353 aa).

Belongs to the PlsX family. In terms of assembly, homodimer. Probably interacts with PlsY.

The protein localises to the cytoplasm. The enzyme catalyses a fatty acyl-[ACP] + phosphate = an acyl phosphate + holo-[ACP]. The protein operates within lipid metabolism; phospholipid metabolism. Catalyzes the reversible formation of acyl-phosphate (acyl-PO(4)) from acyl-[acyl-carrier-protein] (acyl-ACP). This enzyme utilizes acyl-ACP as fatty acyl donor, but not acyl-CoA. The sequence is that of Phosphate acyltransferase from Bradyrhizobium sp. (strain BTAi1 / ATCC BAA-1182).